A 188-amino-acid chain; its full sequence is UPF0488 protein C8orf33 homolog (188 aa).

3 disordered regions span residues 1-65 (MAAP…AEAQ), 87-112 (QRPT…TPLP), and 144-182 (AHSA…RDEE). Residue alanine 2 is modified to N-acetylalanine. A Phosphoserine modification is found at serine 41. The span at 166-182 (PRPEGRSKGTSDTRDEE) shows a compositional bias: basic and acidic residues.

Belongs to the UPF0488 family.

The chain is UPF0488 protein C8orf33 homolog from Bos taurus (Bovine).